Consider the following 551-residue polypeptide: Bestrophin-1 (551 aa).

At 1 to 31 (MTITYTNKVANARLGSFSSLLLCWRGSIYKL) the chain is on the cytoplasmic side. Ala-10 lines the Ca(2+) pocket. Residues 32–51 (LYGEFLVFIFLYYSIRGLYR) form a helical membrane-spanning segment. Topologically, residues 52-60 (MVLSSDQQL) are extracellular. A helical membrane pass occupies residues 61-82 (LFEKLALYCDSYIQLIPISFVL). Topologically, residues 83–237 (GFYVTLVVSR…DWISIPLVYT (155 aa)) are cytoplasmic. The chain crosses the membrane as a helical span at residues 238–255 (QVVTVAVYSFFLACLIGR). Residues 256–274 (QFLNPNKDYPGHEMDLVVP) lie on the Extracellular side of the membrane. The chain crosses the membrane as a helical span at residues 275–288 (VFTILQFLFYMGWL). The Cytoplasmic portion of the chain corresponds to 289–551 (KVAEQLINPF…EAGTKPVLYE (263 aa)). 4 residues coordinate Ca(2+): Gln-293, Asn-296, Asp-301, and Asp-304. An auto-inhibitory segment region spans residues 346-379 (PYTAASARSRRHSFMGSTFNISLKKEDLELWSKE). A disordered region spans residues 459 to 489 (SHCGPQAPSSHPTEQSAPSSSDTGDGPSTDY). The segment covering 465–475 (APSSHPTEQSA) has biased composition (polar residues). Over residues 476–488 (PSSSDTGDGPSTD) the composition is skewed to low complexity.

Belongs to the anion channel-forming bestrophin (TC 1.A.46) family. Calcium-sensitive chloride channel subfamily. As to quaternary structure, interacts with YWHAG; this interaction promotes the ligand-gated L-glutamate channel activity leading to the positive regulation of NMDA glutamate receptor activity through the L-glutamate secretion.

The protein localises to the cell membrane. The protein resides in the basolateral cell membrane. The catalysed reaction is 4-aminobutanoate(in) = 4-aminobutanoate(out). The enzyme catalyses L-glutamate(out) = L-glutamate(in). It catalyses the reaction chloride(in) = chloride(out). It carries out the reaction hydrogencarbonate(in) = hydrogencarbonate(out). The catalysed reaction is D-serine(in) = D-serine(out). Inactivated by sulfhydryl-reactive agents. Ligand-gated anion channel that allows the movement of anions across cell membranes when activated by calcium (Ca2+). Allows the movement of chloride and hydrogencarbonate. Found in a partially open conformation leading to significantly smaller chloride movement. Upon F2R/PAR-1 activation, the sequestered calcium is released into the cytosol of astrocytes, leading to the (Ca2+)-dependent release of L-glutamate into the synaptic cleft that targets the neuronal postsynaptic GRIN2A/NMDAR receptor resulting in the synaptic plasticity regulation. Upon activation of the norepinephrine-alpha-1 adrenergic receptor signaling pathway, transports as well D-serine than L-glutamate in a (Ca2+)-dependent manner, leading to activation of adjacent NMDAR receptors and therefore regulates the heterosynaptic long-term depression and metaplasticity during initial memory acquisition. Releases the 4-aminobutanoate neurotransmitter in a (Ca2+)-dependent manner, and participates in its tonic release from cerebellar glial cells. This is Bestrophin-1 from Mus musculus (Mouse).